The following is a 243-amino-acid chain: MSANPLDQFKISTIFKLPSIGGYNIDFTNASLFMVLSTLIISLFCYIGLRKENILPNSMQLIIEAIYNFIVSTIESNVGRKGLQYIPLVFTIFTFIATCNLLGVLPLGFTVTSHIAVTFAISMVVFISVTAIGFKHQGIHFLRILLPKGTPGWLAPMMVFIELFAYCARPVSLSIRLAANMIAGHTIIKVIAGFVIKMNIFLTPLPMAFIIILIGFEIFVAILQAYIFTVLTCVYLSDAINEH.

7 helical membrane-spanning segments follow: residues 29–49 (NASL…YIGL), 54–74 (ILPN…VSTI), 89–109 (VFTI…PLGF), 114–134 (HIAV…AIGF), 144–164 (ILLP…IELF), 182–202 (IAGH…NIFL), and 208–228 (AFII…AYIF).

The protein belongs to the ATPase A chain family. As to quaternary structure, F-type ATPases have 2 components, CF(1) - the catalytic core - and CF(0) - the membrane proton channel. CF(1) has five subunits: alpha(3), beta(3), gamma(1), delta(1), epsilon(1). CF(0) has three main subunits: a(1), b(2) and c(9-12). The alpha and beta chains form an alternating ring which encloses part of the gamma chain. CF(1) is attached to CF(0) by a central stalk formed by the gamma and epsilon chains, while a peripheral stalk is formed by the delta and b chains.

It is found in the cell inner membrane. Key component of the proton channel; it plays a direct role in the translocation of protons across the membrane. This is ATP synthase subunit a from Ehrlichia chaffeensis (strain ATCC CRL-10679 / Arkansas).